A 163-amino-acid chain; its full sequence is NADH-quinone oxidoreductase subunit I (163 aa).

2 4Fe-4S ferredoxin-type domains span residues 53 to 83 and 94 to 123; these read LRRYPNGEERCIACKLCEAICPAQAITIEAG and VRYDIDMVKCIYCGFCQEACPVDAIVEGPN. Residues Cys63, Cys66, Cys69, Cys73, Cys103, Cys106, Cys109, and Cys113 each contribute to the [4Fe-4S] cluster site.

Belongs to the complex I 23 kDa subunit family. In terms of assembly, NDH-1 is composed of 14 different subunits. Subunits NuoA, H, J, K, L, M, N constitute the membrane sector of the complex. The cofactor is [4Fe-4S] cluster.

The protein resides in the cell inner membrane. It catalyses the reaction a quinone + NADH + 5 H(+)(in) = a quinol + NAD(+) + 4 H(+)(out). Its function is as follows. NDH-1 shuttles electrons from NADH, via FMN and iron-sulfur (Fe-S) centers, to quinones in the respiratory chain. The immediate electron acceptor for the enzyme in this species is believed to be ubiquinone. Couples the redox reaction to proton translocation (for every two electrons transferred, four hydrogen ions are translocated across the cytoplasmic membrane), and thus conserves the redox energy in a proton gradient. This is NADH-quinone oxidoreductase subunit I from Agrobacterium fabrum (strain C58 / ATCC 33970) (Agrobacterium tumefaciens (strain C58)).